Consider the following 175-residue polypeptide: Small ribosomal subunit protein uS7 (175 aa).

This sequence belongs to the universal ribosomal protein uS7 family. As to quaternary structure, part of the 30S ribosomal subunit. Contacts proteins S9 and S11.

One of the primary rRNA binding proteins, it binds directly to 16S rRNA where it nucleates assembly of the head domain of the 30S subunit. Is located at the subunit interface close to the decoding center, probably blocks exit of the E-site tRNA. This is Small ribosomal subunit protein uS7 from Neorickettsia sennetsu (strain ATCC VR-367 / Miyayama) (Ehrlichia sennetsu).